The following is a 350-amino-acid chain: uncharacterized protein (350 aa).

Positions Lys-197–Ser-212 are enriched in basic and acidic residues. The disordered stretch occupies residues Lys-197–Val-217.

Its subcellular location is the plastid. It is found in the chloroplast. This is an uncharacterized protein from Euglena gracilis.